A 269-amino-acid polypeptide reads, in one-letter code: tRNA pseudouridine synthase A (269 aa).

D51 serves as the catalytic Nucleophile. Y109 serves as a coordination point for substrate.

It belongs to the tRNA pseudouridine synthase TruA family. Homodimer.

The catalysed reaction is uridine(38/39/40) in tRNA = pseudouridine(38/39/40) in tRNA. Its function is as follows. Formation of pseudouridine at positions 38, 39 and 40 in the anticodon stem and loop of transfer RNAs. The sequence is that of tRNA pseudouridine synthase A from Aeromonas hydrophila subsp. hydrophila (strain ATCC 7966 / DSM 30187 / BCRC 13018 / CCUG 14551 / JCM 1027 / KCTC 2358 / NCIMB 9240 / NCTC 8049).